The chain runs to 372 residues: Queuine tRNA-ribosyltransferase (372 aa).

Aspartate 89 serves as the catalytic Proton acceptor. Substrate contacts are provided by residues 89-93, aspartate 161, and glycine 232; that span reads DSGGF. Residues 262–268 form an RNA binding region; it reads GIGDLPS. The active-site Nucleophile is the aspartate 281. Residues 286–290 are RNA binding; important for wobble base 34 recognition; it reads TKAAR. The Zn(2+) site is built by cysteine 319, cysteine 321, cysteine 324, and histidine 351.

This sequence belongs to the queuine tRNA-ribosyltransferase family. In terms of assembly, homodimer. Within each dimer, one monomer is responsible for RNA recognition and catalysis, while the other monomer binds to the replacement base PreQ1. Zn(2+) is required as a cofactor.

The catalysed reaction is 7-aminomethyl-7-carbaguanine + guanosine(34) in tRNA = 7-aminomethyl-7-carbaguanosine(34) in tRNA + guanine. Its pathway is tRNA modification; tRNA-queuosine biosynthesis. In terms of biological role, catalyzes the base-exchange of a guanine (G) residue with the queuine precursor 7-aminomethyl-7-deazaguanine (PreQ1) at position 34 (anticodon wobble position) in tRNAs with GU(N) anticodons (tRNA-Asp, -Asn, -His and -Tyr). Catalysis occurs through a double-displacement mechanism. The nucleophile active site attacks the C1' of nucleotide 34 to detach the guanine base from the RNA, forming a covalent enzyme-RNA intermediate. The proton acceptor active site deprotonates the incoming PreQ1, allowing a nucleophilic attack on the C1' of the ribose to form the product. After dissociation, two additional enzymatic reactions on the tRNA convert PreQ1 to queuine (Q), resulting in the hypermodified nucleoside queuosine (7-(((4,5-cis-dihydroxy-2-cyclopenten-1-yl)amino)methyl)-7-deazaguanosine). The chain is Queuine tRNA-ribosyltransferase from Chlamydia abortus (strain DSM 27085 / S26/3) (Chlamydophila abortus).